Here is a 496-residue protein sequence, read N- to C-terminus: Lysine--tRNA ligase (496 aa).

Mg(2+)-binding residues include E403 and E410.

This sequence belongs to the class-II aminoacyl-tRNA synthetase family. In terms of assembly, homodimer. Mg(2+) serves as cofactor.

The protein localises to the cytoplasm. It carries out the reaction tRNA(Lys) + L-lysine + ATP = L-lysyl-tRNA(Lys) + AMP + diphosphate. The chain is Lysine--tRNA ligase from Aster yellows witches'-broom phytoplasma (strain AYWB).